Consider the following 306-residue polypeptide: Acetyl-coenzyme A carboxylase carboxyl transferase subunit beta (306 aa).

The CoA carboxyltransferase N-terminal domain maps to 25–294 (LWIKDPTSGE…AVNPSNPSPT (270 aa)). A disordered region spans residues 286–306 (VNPSNPSPTDSQPPLSKAEAA). A compositionally biased stretch (polar residues) spans 287–299 (NPSNPSPTDSQPP).

It belongs to the AccD/PCCB family. In terms of assembly, acetyl-CoA carboxylase is a heterohexamer composed of biotin carboxyl carrier protein (AccB), biotin carboxylase (AccC) and two subunits each of ACCase subunit alpha (AccA) and ACCase subunit beta (AccD).

The protein localises to the cytoplasm. The enzyme catalyses N(6)-carboxybiotinyl-L-lysyl-[protein] + acetyl-CoA = N(6)-biotinyl-L-lysyl-[protein] + malonyl-CoA. It functions in the pathway lipid metabolism; malonyl-CoA biosynthesis; malonyl-CoA from acetyl-CoA: step 1/1. Functionally, component of the acetyl coenzyme A carboxylase (ACC) complex. Biotin carboxylase (BC) catalyzes the carboxylation of biotin on its carrier protein (BCCP) and then the CO(2) group is transferred by the transcarboxylase to acetyl-CoA to form malonyl-CoA. This chain is Acetyl-coenzyme A carboxylase carboxyl transferase subunit beta, found in Bartonella quintana (strain Toulouse) (Rochalimaea quintana).